An 84-amino-acid polypeptide reads, in one-letter code: U8-theraphotoxin-Hhn1c 2 (84 aa).

The first 21 residues, 1–21 (MKVVLLVCLVWMMAMMELVSC), serve as a signal peptide directing secretion. 5 disulfides stabilise this stretch: Cys-23/Cys-35, Cys-29/Cys-44, Cys-34/Cys-67, Cys-54/Cys-75, and Cys-69/Cys-81.

The protein belongs to the AVIT (prokineticin) family. In terms of tissue distribution, expressed by the venom gland.

The protein localises to the secreted. The chain is U8-theraphotoxin-Hhn1c 2 from Cyriopagopus hainanus (Chinese bird spider).